The sequence spans 448 residues: Proton extrusion protein PxcA (448 aa).

4 helical membrane passes run 231 to 251 (ILLL…FFLI), 323 to 343 (IDSI…VLVL), 372 to 392 (LIIL…WEVI), and 408 to 428 (FNFL…KYWI).

This sequence belongs to the CemA family.

The protein resides in the cell inner membrane. Its function is as follows. Required for H(+) efflux immediately after light irradiation to form a rapid H(+) concentration gradient across the thylakoid membranes. Together with PxcL, contributes to transient H(+) uptake following dark to light transition. This chain is Proton extrusion protein PxcA, found in Rippkaea orientalis (strain PCC 8801 / RF-1) (Cyanothece sp. (strain PCC 8801)).